The primary structure comprises 496 residues: Aspartyl/glutamyl-tRNA(Asn/Gln) amidotransferase subunit B (496 aa).

It belongs to the GatB/GatE family. GatB subfamily. Heterotrimer of A, B and C subunits.

The catalysed reaction is L-glutamyl-tRNA(Gln) + L-glutamine + ATP + H2O = L-glutaminyl-tRNA(Gln) + L-glutamate + ADP + phosphate + H(+). The enzyme catalyses L-aspartyl-tRNA(Asn) + L-glutamine + ATP + H2O = L-asparaginyl-tRNA(Asn) + L-glutamate + ADP + phosphate + 2 H(+). Functionally, allows the formation of correctly charged Asn-tRNA(Asn) or Gln-tRNA(Gln) through the transamidation of misacylated Asp-tRNA(Asn) or Glu-tRNA(Gln) in organisms which lack either or both of asparaginyl-tRNA or glutaminyl-tRNA synthetases. The reaction takes place in the presence of glutamine and ATP through an activated phospho-Asp-tRNA(Asn) or phospho-Glu-tRNA(Gln). This chain is Aspartyl/glutamyl-tRNA(Asn/Gln) amidotransferase subunit B, found in Natronomonas pharaonis (strain ATCC 35678 / DSM 2160 / CIP 103997 / JCM 8858 / NBRC 14720 / NCIMB 2260 / Gabara) (Halobacterium pharaonis).